A 187-amino-acid chain; its full sequence is Thermosensitive gluconokinase (187 aa).

ATP is bound at residue 10-17 (GVSGSGKT).

Belongs to the gluconokinase GntK/GntV family.

It catalyses the reaction D-gluconate + ATP = 6-phospho-D-gluconate + ADP + H(+). It functions in the pathway carbohydrate acid metabolism; L-idonate degradation. The protein is Thermosensitive gluconokinase (idnK) of Escherichia coli (strain K12).